Reading from the N-terminus, the 174-residue chain is MRVEHIIGNIKDIDATHLDIDEVQIAWYDTKKKIARLNSQNGQVIAMKLAQAPKYGLNNGDILFLDEHKIIIISILPTWVLCMKPTHWHTMARLCYEIGNLHIPLFYNKDTMKLQAPFEQPLQRILEKQSIAFEKKWCVLDSKDRINITYPIASEPKLIQSPHFSIKITQKGLN.

Belongs to the UreE family.

It localises to the cytoplasm. Functionally, involved in urease metallocenter assembly. Binds nickel. Probably functions as a nickel donor during metallocenter assembly. This Helicobacter hepaticus (strain ATCC 51449 / 3B1) protein is Urease accessory protein UreE.